Here is a 266-residue protein sequence, read N- to C-terminus: Trypsin 5G1 (266 aa).

An N-terminal signal peptide occupies residues 1 to 18; sequence MTRIILILTATFFACALG. Residues 19 to 39 constitute a propeptide, activation peptide; it reads ASTGGSHPLRPWWNALRSSGR. Residues 40 to 265 enclose the Peptidase S1 domain; sequence IVGGFEVPVE…VRDWVKEVSG (226 aa). Cysteine 66 and cysteine 82 form a disulfide bridge. Active-site charge relay system residues include histidine 81 and aspartate 125. Intrachain disulfides connect cysteine 190/cysteine 206 and cysteine 217/cysteine 241. Serine 221 (charge relay system) is an active-site residue.

Belongs to the peptidase S1 family. As to expression, midgut.

Its subcellular location is the secreted. It localises to the extracellular space. The catalysed reaction is Preferential cleavage: Arg-|-Xaa, Lys-|-Xaa.. In terms of biological role, major function may be to aid in digestion of the blood meal. This Aedes aegypti (Yellowfever mosquito) protein is Trypsin 5G1.